A 546-amino-acid chain; its full sequence is Methionine--tRNA ligase (546 aa).

The short motif at 15 to 25 is the 'HIGH' region element; sequence PYANGPIHLGH. Residues cysteine 146, cysteine 149, cysteine 159, and cysteine 162 each coordinate Zn(2+). A 'KMSKS' region motif is present at residues 332–336; that stretch reads KMSKS. ATP is bound at residue lysine 335.

The protein belongs to the class-I aminoacyl-tRNA synthetase family. MetG type 1 subfamily. In terms of assembly, monomer. The cofactor is Zn(2+).

It is found in the cytoplasm. It carries out the reaction tRNA(Met) + L-methionine + ATP = L-methionyl-tRNA(Met) + AMP + diphosphate. Its function is as follows. Is required not only for elongation of protein synthesis but also for the initiation of all mRNA translation through initiator tRNA(fMet) aminoacylation. This Coxiella burnetii (strain RSA 331 / Henzerling II) protein is Methionine--tRNA ligase.